Here is a 156-residue protein sequence, read N- to C-terminus: Small ribosomal subunit protein uS7 (156 aa).

This sequence belongs to the universal ribosomal protein uS7 family. As to quaternary structure, part of the 30S ribosomal subunit. Contacts proteins S9 and S11.

Functionally, one of the primary rRNA binding proteins, it binds directly to 16S rRNA where it nucleates assembly of the head domain of the 30S subunit. Is located at the subunit interface close to the decoding center, probably blocks exit of the E-site tRNA. This is Small ribosomal subunit protein uS7 from Bacillus pumilus (strain SAFR-032).